The chain runs to 600 residues: Kynurenine 3-monooxygenase (600 aa).

The tract at residues 217–242 (GDSCADEPSGCGGRKQATTKSQGSEY) is disordered.

It belongs to the aromatic-ring hydroxylase family. KMO subfamily. FAD is required as a cofactor.

The protein localises to the mitochondrion outer membrane. It catalyses the reaction L-kynurenine + NADPH + O2 + H(+) = 3-hydroxy-L-kynurenine + NADP(+) + H2O. Its pathway is cofactor biosynthesis; NAD(+) biosynthesis; quinolinate from L-kynurenine: step 1/3. Catalyzes the hydroxylation of L-kynurenine (L-Kyn) to form 3-hydroxy-L-kynurenine (L-3OHKyn). Required for synthesis of quinolinic acid. This is Kynurenine 3-monooxygenase from Mycosarcoma maydis (Corn smut fungus).